Reading from the N-terminus, the 185-residue chain is Ribosome-recycling factor (185 aa).

The protein belongs to the RRF family.

The protein resides in the cytoplasm. Responsible for the release of ribosomes from messenger RNA at the termination of protein biosynthesis. May increase the efficiency of translation by recycling ribosomes from one round of translation to another. This is Ribosome-recycling factor from Azotobacter vinelandii (strain DJ / ATCC BAA-1303).